Here is a 70-residue protein sequence, read N- to C-terminus: Large ribosomal subunit protein uL29 (70 aa).

The protein belongs to the universal ribosomal protein uL29 family.

The chain is Large ribosomal subunit protein uL29 from Prochlorococcus marinus (strain MIT 9303).